A 163-amino-acid polypeptide reads, in one-letter code: Small ribosomal subunit protein bS6 (163 aa).

A disordered region spans residues 97–163; that stretch reads EEGQTAMLTN…GRNEGEGDRA (67 aa). Over residues 122 to 163 the composition is skewed to basic and acidic residues; it reads RGPRRDFGDRGPRRDFGDRGPRRDGDGPRAEGGRNEGEGDRA.

This sequence belongs to the bacterial ribosomal protein bS6 family.

Binds together with bS18 to 16S ribosomal RNA. This Rhodospirillum centenum (strain ATCC 51521 / SW) protein is Small ribosomal subunit protein bS6.